Consider the following 45-residue polypeptide: MDVNFLLSALPEPYAAFRPIVDVMPAIPVFFLLLAFVWQASVGFR.

A propeptide spanning residues 1–8 is cleaved from the precursor; sequence MDVNFLLS. A helical membrane pass occupies residues 20-40; that stretch reads IVDVMPAIPVFFLLLAFVWQA.

Belongs to the PsbK family. PSII is composed of 1 copy each of membrane proteins PsbA, PsbB, PsbC, PsbD, PsbE, PsbF, PsbH, PsbI, PsbJ, PsbK, PsbL, PsbM, PsbT, PsbX, PsbY, PsbZ, Psb30/Ycf12, at least 3 peripheral proteins of the oxygen-evolving complex and a large number of cofactors. It forms dimeric complexes.

The protein resides in the plastid. It localises to the chloroplast thylakoid membrane. In terms of biological role, one of the components of the core complex of photosystem II (PSII). PSII is a light-driven water:plastoquinone oxidoreductase that uses light energy to abstract electrons from H(2)O, generating O(2) and a proton gradient subsequently used for ATP formation. It consists of a core antenna complex that captures photons, and an electron transfer chain that converts photonic excitation into a charge separation. The sequence is that of Photosystem II reaction center protein K from Emiliania huxleyi (Coccolithophore).